Consider the following 130-residue polypeptide: Holo-[acyl-carrier-protein] synthase (130 aa).

D8 and E62 together coordinate Mg(2+).

This sequence belongs to the P-Pant transferase superfamily. AcpS family. Mg(2+) is required as a cofactor.

It localises to the cytoplasm. The enzyme catalyses apo-[ACP] + CoA = holo-[ACP] + adenosine 3',5'-bisphosphate + H(+). Its function is as follows. Transfers the 4'-phosphopantetheine moiety from coenzyme A to a Ser of acyl-carrier-protein. The chain is Holo-[acyl-carrier-protein] synthase from Variovorax paradoxus (strain S110).